Consider the following 226-residue polypeptide: ATP synthase subunit C lysine N-methyltransferase (226 aa).

A helical transmembrane segment spans residues 35–55 (VIGGTLVALYAVATPFVAPAL). Positions 48-82 (TPFVAPALRKLCLPYVPATTTQVKNVLKMLRSRTG) are required for mitochondrial location.

It belongs to the ANT/ATPSC lysine N-methyltransferase family.

The protein resides in the mitochondrion membrane. Its function is as follows. Mitochondrial protein-lysine N-methyltransferase that promotes chronic pain. Involved in persistent inflammatory and neuropathic pain: methyltransferase activity in the mitochondria of sensory neurons promotes chronic pain via a pathway that depends on the production of reactive oxygen species (ROS) and on the engagement of spinal cord microglia. Protein-lysine N-methyltransferase activity is dependent on S-adenosyl-L-methionine. This is ATP synthase subunit C lysine N-methyltransferase (atpsckmt) from Xenopus laevis (African clawed frog).